A 334-amino-acid chain; its full sequence is MTPKIAIIGEGVIGCSTALQVAQAVPDARVTVLSDRPFEQTCSFGPAGLFRIDDIANREFGKSTFDWFAHLHRTEKGDKTGVKLLSGHIQSDSKERLEQQQKAYGDIVYNFRFLEKREILDLFPNPSEHCIHYTAFASEGNKYVPYLKFQCQARGVEFLHRKVRDLEELANEGYDVIVNCAGLSGGTLAGDDDSVYPIRGVVLDVEAHWHKHFNYKDFITFTIPKENSVVIGSVKQENRWDLEITDVDRKDILERYVALHPAMREPKILGEWSGLRPARKTIRIEKVEKKSEKSGKKYTVVHHYGHGGNGFTLGWGTAVEATKLVKSALNSSKL.

FAD is bound by residues Asp35, Arg36, Ser43, Gly307, and Thr312. Residues 332–334 (SKL) carry the Microbody targeting signal motif.

Belongs to the DAMOX/DASOX family. The cofactor is FAD. In terms of tissue distribution, expressed in the intestinal cells, hypodermis and in unidentified cells in the head in adult hermaphrodites.

Its subcellular location is the peroxisome matrix. The catalysed reaction is D-aspartate + O2 + H2O = oxaloacetate + H2O2 + NH4(+). The enzyme catalyses D-glutamate + O2 + H2O = H2O2 + 2-oxoglutarate + NH4(+). Its activity is regulated as follows. Not inhibited by potassium bromide or thiolactomycin. Its function is as follows. Selectively catalyzes the oxidative deamination of acidic amino acids. May play a role in the egg-laying events and early development of the worm, in addition to quality control of the germ cells. The chain is D-aspartate oxidase 1 (ddo-1) from Caenorhabditis elegans.